A 106-amino-acid chain; its full sequence is A-type ATP synthase subunit F (106 aa).

This sequence belongs to the V-ATPase F subunit family. Has multiple subunits with at least A(3), B(3), C, D, E, F, H, I and proteolipid K(x).

The protein localises to the cell membrane. Component of the A-type ATP synthase that produces ATP from ADP in the presence of a proton gradient across the membrane. The chain is A-type ATP synthase subunit F from Haloferax volcanii (strain ATCC 29605 / DSM 3757 / JCM 8879 / NBRC 14742 / NCIMB 2012 / VKM B-1768 / DS2) (Halobacterium volcanii).